A 37-amino-acid polypeptide reads, in one-letter code: Large ribosomal subunit protein bL36A (37 aa).

It belongs to the bacterial ribosomal protein bL36 family.

The polypeptide is Large ribosomal subunit protein bL36A (Leifsonia xyli subsp. xyli (strain CTCB07)).